Consider the following 194-residue polypeptide: Dephospho-CoA kinase (194 aa).

The DPCK domain occupies 4–194; it reads ALGLTGSIGM…HLVSKLTEGT (191 aa). ATP is bound at residue 12 to 17; it reads GMGKST.

Belongs to the CoaE family.

It localises to the cytoplasm. It carries out the reaction 3'-dephospho-CoA + ATP = ADP + CoA + H(+). The protein operates within cofactor biosynthesis; coenzyme A biosynthesis; CoA from (R)-pantothenate: step 5/5. Catalyzes the phosphorylation of the 3'-hydroxyl group of dephosphocoenzyme A to form coenzyme A. This Jannaschia sp. (strain CCS1) protein is Dephospho-CoA kinase.